We begin with the raw amino-acid sequence, 652 residues long: Serine/threonine-protein kinase ssp1 (652 aa).

Tyr58 carries the phosphotyrosine modification. The residue at position 59 (Ser59) is a Phosphoserine. The residue at position 63 (Tyr63) is a Phosphotyrosine. One can recognise a Protein kinase domain in the interval Tyr135–Thr409. ATP-binding positions include Leu141–Val149 and Lys164. Asp267 (proton acceptor) is an active-site residue. Disordered regions lie at residues Asp467–Leu491 and Asn506–Lys529. Positions Ser508 to His518 are enriched in basic and acidic residues.

It belongs to the protein kinase superfamily. Ser/Thr protein kinase family.

The protein localises to the cytoplasm. It carries out the reaction L-seryl-[protein] + ATP = O-phospho-L-seryl-[protein] + ADP + H(+). The catalysed reaction is L-threonyl-[protein] + ATP = O-phospho-L-threonyl-[protein] + ADP + H(+). Its function is as follows. Involved in actin localization and thus in polarized cell growth. The sequence is that of Serine/threonine-protein kinase ssp1 (ssp1) from Schizosaccharomyces pombe (strain 972 / ATCC 24843) (Fission yeast).